The primary structure comprises 146 residues: Urease accessory protein UreE 1 (146 aa).

Belongs to the UreE family.

It localises to the cytoplasm. Its function is as follows. Involved in urease metallocenter assembly. Binds nickel. Probably functions as a nickel donor during metallocenter assembly. The chain is Urease accessory protein UreE 1 from Pseudomonas syringae pv. syringae (strain B728a).